Reading from the N-terminus, the 21-residue chain is Fibrinogen beta chain (21 aa).

At Gln1 the chain carries Pyrrolidone carboxylic acid. Tyr6 is modified (sulfotyrosine).

As to quaternary structure, heterohexamer; disulfide linked. Contains 2 sets of 3 non-identical chains (alpha, beta and gamma). The 2 heterotrimers are in head to head conformation with the N-termini in a small central domain. Conversion of fibrinogen to fibrin is triggered by thrombin, which cleaves fibrinopeptides A and B from alpha and beta chains, and thus exposes the N-terminal polymerization sites responsible for the formation of the soft clot.

It localises to the secreted. Its function is as follows. Cleaved by the protease thrombin to yield monomers which, together with fibrinogen alpha (FGA) and fibrinogen gamma (FGG), polymerize to form an insoluble fibrin matrix. Fibrin has a major function in hemostasis as one of the primary components of blood clots. In addition, functions during the early stages of wound repair to stabilize the lesion and guide cell migration during re-epithelialization. Was originally thought to be essential for platelet aggregation, based on in vitro studies using anticoagulated blood. However subsequent studies have shown that it is not absolutely required for thrombus formation in vivo. Enhances expression of SELP in activated platelets. Maternal fibrinogen is essential for successful pregnancy. Fibrin deposition is also associated with infection, where it protects against IFNG-mediated hemorrhage. May also facilitate the antibacterial immune response via both innate and T-cell mediated pathways. The chain is Fibrinogen beta chain (FGB) from Odocoileus hemionus (Mule deer).